The sequence spans 185 residues: Elongation factor P (185 aa).

The protein belongs to the elongation factor P family.

It is found in the cytoplasm. It functions in the pathway protein biosynthesis; polypeptide chain elongation. Its function is as follows. Involved in peptide bond synthesis. Stimulates efficient translation and peptide-bond synthesis on native or reconstituted 70S ribosomes in vitro. Probably functions indirectly by altering the affinity of the ribosome for aminoacyl-tRNA, thus increasing their reactivity as acceptors for peptidyl transferase. This is Elongation factor P from Clostridioides difficile (strain 630) (Peptoclostridium difficile).